The following is a 488-amino-acid chain: MPGGRRGPSRQQLSRSALPSLQTLVGGGCGNGTGLRNRNGSAIGLPVPPITALITPGPVRHCQIPDLPVDGSLLFEFLFFIYLLVALFIQYINIYKTVWWYPYNHPASCTSLNFHLIDYHLAAFITVMLARRLVWALISEATKAGAASMIHYMVLISARLVLLTLCGWVLCWTLVNLFRSHSVLNLLFLGYPFGVYVPLCCFHQDSRAHLLLTDYNYVVQHEAVEESASTVGGLAKSKDFLSLLLESLKEQFNNATPIPTHSCPLSPDLIRNEVECLKADFNHRIKEVLFNSLFSAYYVAFLPLCFVKSTQYYDMRWSCEHLIMVWINAFVMLTTQLLPSKYCDLLHKSAAHLGKWQKLEHGSYSNAPQHIWSENTIWPQGVLVRHSRCLYRAMGPYNVAVPSDVSHARFYFLFHRPLRLLNLLILIEGSVVFYQLYSLLRSEKWNHTLSMALILFCNYYVLFKLLRDRIVLGRAYSYPLNSYELKAN.

2 N-linked (GlcNAc...) asparagine glycosylation sites follow: Asn-31 and Asn-39. 8 helical membrane-spanning segments follow: residues 72–92 (SLLFEFLFFIYLLVALFIQYI), 110–130 (TSLNFHLIDYHLAAFITVMLA), 154–174 (VLISARLVLLTLCGWVLCWTL), 182–202 (SVLNLLFLGYPFGVYVPLCCF), 287–307 (EVLFNSLFSAYYVAFLPLCFV), 319–339 (CEHLIMVWINAFVMLTTQLLP), 420–440 (LLNLLILIEGSVVFYQLYSLL), and 446–466 (NHTLSMALILFCNYYVLFKLL).

This sequence belongs to the TMEM39 family. Interacts with SACM1L, SEC23A and SEC24A. In terms of assembly, (Microbial infection) Interacts with encephalomyocarditis virus (EMCV) major capsid proteins VP1 and VP2. In terms of tissue distribution, up-regulated in brain tumor glioblastoma multiforme cells (at protein level).

The protein localises to the endoplasmic reticulum membrane. Functionally, regulates autophagy by controlling the spatial distribution and levels of the intracellular phosphatidylinositol 4-phosphate (PtdIns(4)P) pools. Modulates (PtdIns(4)P) levels by regulating the ER-to-Golgi trafficking of the phosphatidylinositide phosphatase SACM1L. (Microbial infection) Positively regulates the replication of encephalomyocarditis virus (EMCV) via autophagy-dependent pathway. This chain is Transmembrane protein 39A (TMEM39A), found in Homo sapiens (Human).